Here is a 287-residue protein sequence, read N- to C-terminus: Hydroxysteroid 11-beta-dehydrogenase 1-like protein (287 aa).

An N-terminal signal peptide occupies residues 1–22 (MKLYAKLLLCSICVAFIAVRWS). NADP(+) contacts are provided by residues 40-66 (GAST…TARR), 91-92 (DM), and 118-120 (NHI). Residue Ser169 coordinates substrate. Residue Tyr182 is the Proton acceptor of the active site. NADP(+) is bound by residues 182-186 (YASTK) and 215-221 (GLIDTDS).

Belongs to the short-chain dehydrogenases/reductases (SDR) family.

It is found in the secreted. The enzyme catalyses cortisone + NADPH + H(+) = cortisol + NADP(+). Unidirectional NADP(+)-dependent cortisol dehydrogenase (in vitro). This Danio rerio (Zebrafish) protein is Hydroxysteroid 11-beta-dehydrogenase 1-like protein (hsd11b1l).